The primary structure comprises 352 residues: Ubiquitin thioesterase otulin (352 aa).

Residues 1–49 (MSRGTMPQPGAWPGASCAETPAREAGAAARDGGKVTAGAQPRAATRCPA) form a disordered region. Residues 18–30 (AETPAREAGAAAR) are compositionally biased toward low complexity. Residues 49–73 (AEHEEDMYRAADEIEKEKELLIHER) adopt a coiled-coil conformation. A PIM motif motif is present at residues 52–57 (EEDMYR). Tyr56 carries the phosphotyrosine modification. Linear diubiquitin binding regions lie at residues 95–96 (EW) and 124–126 (RGD). The OTU domain occupies 118 to 346 (TSIRRVRGDN…DRHYNIPVRV (229 aa)). Asp126 is a catalytic residue. Cys129 functions as the Nucleophile in the catalytic mechanism. Linear diubiquitin binding regions lie at residues 255-259 (FFSVL), 283-289 (TGGLEQV), and 336-338 (DDR). His339 is a catalytic residue. A PDZ-binding motif is present at residues 349 to 352 (ETSV).

This sequence belongs to the peptidase C65 family. Otulin subfamily. In terms of assembly, interacts (via the PUB domain) with RNF31 (via the PIM motif); the interaction is direct. Interacts with DVL2. In terms of processing, ubiquitinated. Post-translationally, acetylated. Phosphorylated. Phosphorylation at Tyr-56 prevents interaction with RNF31; dephosphorylation promotes interaction with RNF31 and the LUBAC complex.

It is found in the cytoplasm. It carries out the reaction Thiol-dependent hydrolysis of ester, thioester, amide, peptide and isopeptide bonds formed by the C-terminal Gly of ubiquitin (a 76-residue protein attached to proteins as an intracellular targeting signal).. In terms of biological role, deubiquitinase that specifically removes linear ('Met-1'-linked) polyubiquitin chains to substrates and acts as a regulator of angiogenesis and innate immune response. Required during angiogenesis, craniofacial and neuronal development by regulating the canonical Wnt signaling together with the LUBAC complex. Acts as a negative regulator of NF-kappa-B by regulating the activity of the LUBAC complex. OTULIN function is mainly restricted to homeostasis of the LUBAC complex: acts by removing 'Met-1'-linked autoubiquitination of the LUBAC complex, thereby preventing inactivation of the LUBAC complex. Acts as a key negative regulator of inflammation by restricting spontaneous inflammation and maintaining immune homeostasis. In myeloid cell, required to prevent unwarranted secretion of cytokines leading to inflammation and autoimmunity by restricting linear polyubiquitin formation. Plays a role in innate immune response by restricting linear polyubiquitin formation on LUBAC complex in response to NOD2 stimulation, probably to limit NOD2-dependent pro-inflammatory signaling. The polypeptide is Ubiquitin thioesterase otulin (Mus musculus (Mouse)).